Reading from the N-terminus, the 90-residue chain is Small ribosomal subunit protein bS20 (90 aa).

Over residues 1–11 the composition is skewed to basic and acidic residues; that stretch reads MANIKSSEKDI. 2 disordered regions span residues 1-29 and 69-90; these read MANI…SRLR and SKNA…SAAA.

Belongs to the bacterial ribosomal protein bS20 family.

Binds directly to 16S ribosomal RNA. This chain is Small ribosomal subunit protein bS20, found in Leptospira borgpetersenii serovar Hardjo-bovis (strain L550).